We begin with the raw amino-acid sequence, 1583 residues long: Dynamin-binding protein (1583 aa).

Met1 bears the N-acetylmethionine mark. 4 consecutive SH3 domains span residues 2-61 (EAGS…IVTI), 66-126 (EGER…ELCL), 145-204 (YSMG…LLGP), and 243-302 (QPGT…LFSK). 3 disordered regions span residues 217 to 244 (HNDCIINGEEETPTGEEERGPEEDEEQP), 306 to 329 (EETMDLPKESSPTEIPDTSLDCRE), and 366 to 464 (ECEV…RGMY). Positions 224–243 (GEEETPTGEEERGPEEDEEQ) are enriched in acidic residues. Basic and acidic residues predominate over residues 366–379 (ECEVHKSSHQDEGT). A compositionally biased stretch (polar residues) spans 406 to 442 (ETINGVSSQSQVPFRPRWQQNQYYSTTGRGHLSTEQY). Ser495 carries the post-translational modification Phosphoserine. Disordered stretches follow at residues 594 to 656 (RGSS…PSAQ) and 671 to 693 (LFTHESCESPEKEGPENLDQTLD). The segment covering 637–653 (PEPPLAMRPSRPAPLPP) has biased composition (pro residues). Residues 675–685 (ESCESPEKEGP) show a composition bias toward basic and acidic residues. Positions 742–762 (LEFYESNIESLNMELQQLREM) form a coiled coil. Residues 791 to 974 (KRAKVIEELL…KEINVNINEY (184 aa)) form the DH domain. The region spanning 1015-1224 (LKHLTGFAPQ…LKVAGREGNL (210 aa)) is the BAR domain. The region spanning 1292 to 1355 (PPEKLFQAER…YSSFLKPYNT (64 aa)) is the SH3 5 domain. A disordered region spans residues 1357–1496 (RSHSDVSVGS…GRNGQGKDLT (140 aa)). Residues 1361 to 1387 (DVSVGSHSSTESEQSSSSPRFPRQNSS) are compositionally biased toward low complexity. A compositionally biased stretch (polar residues) spans 1388–1414 (GTLTFNPGSMAVSFTSGSCQKQPQDAT). Residues 1433–1456 (SESSPSRCPSDPDSSPQPRSWDSP) show a composition bias toward low complexity. The region spanning 1519–1582 (EGNQVYFAVY…PSNYIRKAEY (64 aa)) is the SH3 6 domain.

Binds DNM1 via its N-terminal SH3 domains. The C-terminal SH3 domain binds a complex containing actin, tubulin, Hsp70 and actin-regulatory proteins, such as ENAH, EVL, WIRE, CR16, WAVE1 and NAP1L1. Interacts with FASLG. Interacts (via SH3 domain 6) with WASL. Interacts (via SH3 domain 6) interacts with ENAH. Interacts (via C-terminal domain) with TJP1; required for the apical cell-cell junction localization of DNMBP.

The protein resides in the cytoplasm. It localises to the golgi apparatus. Its subcellular location is the golgi stack. The protein localises to the cytoskeleton. It is found in the synapse. The protein resides in the cell junction. Plays a critical role as a guanine nucleotide exchange factor (GEF) for CDC42 in several intracellular processes associated with the actin and microtubule cytoskeleton. Regulates the structure of apical junctions in epithelial cells. Participates in the normal lumenogenesis of epithelial cell cysts by regulating spindle orientation. Plays a key role in ciliogenesis and cyst formation. May play a role in membrane trafficking between the cell surface and the Golgi. The sequence is that of Dynamin-binding protein from Canis lupus familiaris (Dog).